Here is a 504-residue protein sequence, read N- to C-terminus: UDP-N-acetylmuramoylalanine--D-glutamate ligase (504 aa).

129 to 135 (GTNGKTT) serves as a coordination point for ATP.

Belongs to the MurCDEF family.

The protein localises to the cytoplasm. It catalyses the reaction UDP-N-acetyl-alpha-D-muramoyl-L-alanine + D-glutamate + ATP = UDP-N-acetyl-alpha-D-muramoyl-L-alanyl-D-glutamate + ADP + phosphate + H(+). Its pathway is cell wall biogenesis; peptidoglycan biosynthesis. In terms of biological role, cell wall formation. Catalyzes the addition of glutamate to the nucleotide precursor UDP-N-acetylmuramoyl-L-alanine (UMA). This Burkholderia mallei (strain ATCC 23344) protein is UDP-N-acetylmuramoylalanine--D-glutamate ligase.